A 277-amino-acid polypeptide reads, in one-letter code: NADPH-dependent 7-cyano-7-deazaguanine reductase (277 aa).

86 to 88 (IES) lines the substrate pocket. 88–89 (SK) serves as a coordination point for NADPH. The active-site Thioimide intermediate is C184. The active-site Proton donor is the D191. 223-224 (HE) provides a ligand contact to substrate. 252–253 (RG) contacts NADPH.

This sequence belongs to the GTP cyclohydrolase I family. QueF type 2 subfamily. In terms of assembly, homodimer.

Its subcellular location is the cytoplasm. The catalysed reaction is 7-aminomethyl-7-carbaguanine + 2 NADP(+) = 7-cyano-7-deazaguanine + 2 NADPH + 3 H(+). It functions in the pathway tRNA modification; tRNA-queuosine biosynthesis. Catalyzes the NADPH-dependent reduction of 7-cyano-7-deazaguanine (preQ0) to 7-aminomethyl-7-deazaguanine (preQ1). The protein is NADPH-dependent 7-cyano-7-deazaguanine reductase of Chromohalobacter salexigens (strain ATCC BAA-138 / DSM 3043 / CIP 106854 / NCIMB 13768 / 1H11).